A 126-amino-acid polypeptide reads, in one-letter code: Protein ApaG (126 aa).

The ApaG domain maps to 2 to 126; the sequence is SALDDSIRVE…FRLALPGLLH (125 aa).

In Shewanella sp. (strain ANA-3), this protein is Protein ApaG.